The sequence spans 207 residues: GILT-like protein 2 (207 aa).

The first 19 residues, 1–19 (MRAAVFVCLLLGWVGVATP), serve as a signal peptide directing secretion. Residues Cys40 and Cys43 are joined by a disulfide bond. N-linked (GlcNAc...) asparagine glycosylation is present at Asn182.

Belongs to the GILT family.

It localises to the secreted. Functionally, probable lysosomal thiol reductase that can reduce protein disulfide bonds. Involved in the immune response to bacterial infection. This Drosophila melanogaster (Fruit fly) protein is GILT-like protein 2.